Here is a 222-residue protein sequence, read N- to C-terminus: MDSLAISPRKLRSDLYSYSYQDDSNTVPLVISVLSSLIERTLARNERISRSYGGFGKTRVFDCREIPDMTIQSYLERIFRYTKAGPSVYVVAYVYIDRFCQNNQGFRISLTNVHRLLITTIMIASKYVEDMNYKNSYFAKVGGLETEDLNNLELEFLFLMGFKLHVNVSVFESYCCHLEREVSIGGGYQIEKALRCAEEIKSRQIVQDPKHHHHHQFSRIML.

It belongs to the cyclin family. Cyclin U/P subfamily. Interacts with CDKA-1. As to expression, expressed in roots, stems and flowers. Expressed in the shoot apex, leaf primordia and young leaves.

This is Cyclin-U2-1 (CYCU2-1) from Arabidopsis thaliana (Mouse-ear cress).